Reading from the N-terminus, the 164-residue chain is Cyclic pyranopterin monophosphate synthase (164 aa).

Substrate-binding positions include 75–77 (MAH) and 112–113 (ME). Aspartate 127 is an active-site residue.

The protein belongs to the MoaC family. Homohexamer; trimer of dimers.

It carries out the reaction (8S)-3',8-cyclo-7,8-dihydroguanosine 5'-triphosphate = cyclic pyranopterin phosphate + diphosphate. It functions in the pathway cofactor biosynthesis; molybdopterin biosynthesis. In terms of biological role, catalyzes the conversion of (8S)-3',8-cyclo-7,8-dihydroguanosine 5'-triphosphate to cyclic pyranopterin monophosphate (cPMP). This is Cyclic pyranopterin monophosphate synthase from Desulforamulus reducens (strain ATCC BAA-1160 / DSM 100696 / MI-1) (Desulfotomaculum reducens).